The primary structure comprises 246 residues: Sugar fermentation stimulation protein homolog (246 aa).

Belongs to the SfsA family.

This is Sugar fermentation stimulation protein homolog from Prochlorococcus marinus (strain MIT 9301).